Consider the following 248-residue polypeptide: uncharacterized protein (248 aa).

A helical transmembrane segment spans residues 7–25 (TIFIGGIYGLGVYIGAVAW).

It belongs to the methyltransferase superfamily. METL family.

It is found in the mitochondrion inner membrane. In terms of biological role, probable methyltransferase. This is an uncharacterized protein from Schizosaccharomyces pombe (strain 972 / ATCC 24843) (Fission yeast).